Reading from the N-terminus, the 399-residue chain is Dihydrolipoyllysine-residue succinyltransferase component of 2-oxoglutarate dehydrogenase complex (399 aa).

The 76-residue stretch at 2–77 (AIDIKAPTFP…LSGELLGKLT (76 aa)) folds into the Lipoyl-binding domain. Lys-43 carries the N6-lipoyllysine modification. One can recognise a Peripheral subunit-binding (PSBD) domain in the interval 104-141 (ILSPAARKIAEENAIAADSITGTGKGGRVTKEDAVAAA). Active-site residues include His-370 and Asp-374.

Belongs to the 2-oxoacid dehydrogenase family. Forms a 24-polypeptide structural core with octahedral symmetry. Part of the 2-oxoglutarate dehydrogenase (OGDH) complex composed of E1 (2-oxoglutarate dehydrogenase), E2 (dihydrolipoamide succinyltransferase) and E3 (dihydrolipoamide dehydrogenase); the complex contains multiple copies of the three enzymatic components (E1, E2 and E3). Requires (R)-lipoate as cofactor.

The enzyme catalyses N(6)-[(R)-dihydrolipoyl]-L-lysyl-[protein] + succinyl-CoA = N(6)-[(R)-S(8)-succinyldihydrolipoyl]-L-lysyl-[protein] + CoA. It functions in the pathway amino-acid degradation; L-lysine degradation via saccharopine pathway; glutaryl-CoA from L-lysine: step 6/6. Its function is as follows. E2 component of the 2-oxoglutarate dehydrogenase (OGDH) complex which catalyzes the second step in the conversion of 2-oxoglutarate to succinyl-CoA and CO(2). This chain is Dihydrolipoyllysine-residue succinyltransferase component of 2-oxoglutarate dehydrogenase complex (sucB), found in Azotobacter vinelandii.